Here is a 137-residue protein sequence, read N- to C-terminus: Small ribosomal subunit protein uS11 (137 aa).

Positions 116 to 137 are disordered; it reads EDVTPIPHDGTRRPGGKRGRRV.

Belongs to the universal ribosomal protein uS11 family. Part of the 30S ribosomal subunit.

Located on the platform of the 30S subunit. The protein is Small ribosomal subunit protein uS11 of Methanopyrus kandleri (strain AV19 / DSM 6324 / JCM 9639 / NBRC 100938).